A 169-amino-acid polypeptide reads, in one-letter code: Cilia- and flagella-associated protein 68 (169 aa).

Mn stretches follow at residues 98–109 and 139–149; these read TTYDTSYNNRRP and KSTYMTSYSKP.

The protein belongs to the CFAP68 family. In terms of assembly, microtubule inner protein component of sperm flagellar doublet microtubules.

It is found in the cytoplasm. The protein resides in the cytoskeleton. Its subcellular location is the cilium axoneme. It localises to the flagellum axoneme. The protein localises to the nucleus. It is found in the cell projection. The protein resides in the cilium. Functionally, microtubule inner protein (MIP) part of the dynein-decorated doublet microtubules (DMTs) in cilia axoneme, which is required for motile cilia beating. In Bos taurus (Bovine), this protein is Cilia- and flagella-associated protein 68 (CFAP68).